The sequence spans 151 residues: Transcriptional repressor NrdR (151 aa).

A zinc finger spans residues 3–34 (CPYCAYGESKVVDSRSTEDGSSIRRRRECLKC). In terms of domain architecture, ATP-cone spans 49–139 (ILVIKKNMSR…VYRQFKDINT (91 aa)).

Belongs to the NrdR family. It depends on Zn(2+) as a cofactor.

In terms of biological role, negatively regulates transcription of bacterial ribonucleotide reductase nrd genes and operons by binding to NrdR-boxes. This chain is Transcriptional repressor NrdR, found in Clostridium botulinum (strain 657 / Type Ba4).